We begin with the raw amino-acid sequence, 311 residues long: Ornithine carbamoyltransferase (311 aa).

Carbamoyl phosphate contacts are provided by residues 54–58, Asn81, Arg104, and 131–134; these read STRTR and HPCQ. L-ornithine-binding positions include Asn164, Asp225, and 229–230; that span reads DM. Carbamoyl phosphate-binding positions include 268-271, Thr279, and Arg297; that span reads HDMP.

This sequence belongs to the aspartate/ornithine carbamoyltransferase superfamily. OTCase family.

The protein resides in the cytoplasm. It carries out the reaction carbamoyl phosphate + L-ornithine = L-citrulline + phosphate + H(+). It participates in amino-acid biosynthesis; L-arginine biosynthesis; L-arginine from L-ornithine and carbamoyl phosphate: step 1/3. Its function is as follows. Reversibly catalyzes the transfer of the carbamoyl group from carbamoyl phosphate (CP) to the N(epsilon) atom of ornithine (ORN) to produce L-citrulline. This is Ornithine carbamoyltransferase (argF) from Leptospira interrogans serogroup Icterohaemorrhagiae serovar copenhageni (strain Fiocruz L1-130).